The following is a 314-amino-acid chain: Nodulation protein D 1 (314 aa).

The 58-residue stretch at 6–63 (LDLNLLVALDALMTERNLTAAARQINLSQPAMSAAIARLRSYFRDELFTMRGRELVPT) folds into the HTH lysR-type domain. Positions 23–42 (LTAAARQINLSQPAMSAAIA) form a DNA-binding region, H-T-H motif.

Belongs to the LysR transcriptional regulatory family.

In terms of biological role, nodD regulates the expression of the nodABCFE genes which encode other nodulation proteins. NodD is also a negative regulator of its own expression. Binds flavonoids as inducers. This Bradyrhizobium elkanii protein is Nodulation protein D 1 (nodD1).